The primary structure comprises 118 residues: Large ribosomal subunit protein uL18 (118 aa).

This sequence belongs to the universal ribosomal protein uL18 family. As to quaternary structure, part of the 50S ribosomal subunit; part of the 5S rRNA/L5/L18/L25 subcomplex. Contacts the 5S and 23S rRNAs.

In terms of biological role, this is one of the proteins that bind and probably mediate the attachment of the 5S RNA into the large ribosomal subunit, where it forms part of the central protuberance. The chain is Large ribosomal subunit protein uL18 from Rickettsia typhi (strain ATCC VR-144 / Wilmington).